Here is a 359-residue protein sequence, read N- to C-terminus: Glutamate 5-kinase (359 aa).

An ATP-binding site is contributed by K7. The substrate site is built by S47, D135, and N147. 202-208 is a binding site for ATP; sequence SGGITSK. The PUA domain maps to 266-343; the sequence is KGSIFINEGA…DQLEDVLGYS (78 aa).

The protein belongs to the glutamate 5-kinase family.

The protein resides in the cytoplasm. The catalysed reaction is L-glutamate + ATP = L-glutamyl 5-phosphate + ADP. It functions in the pathway amino-acid biosynthesis; L-proline biosynthesis; L-glutamate 5-semialdehyde from L-glutamate: step 1/2. In terms of biological role, catalyzes the transfer of a phosphate group to glutamate to form L-glutamate 5-phosphate. The chain is Glutamate 5-kinase from Kosmotoga olearia (strain ATCC BAA-1733 / DSM 21960 / TBF 19.5.1).